A 243-amino-acid chain; its full sequence is Venom peptide isomerase heavy chain (243 aa).

One can recognise a Peptidase S1 domain in the interval 1–243 (IVGGKTAKFG…YTNWMSKNMV (243 aa)). Residues cysteine 31 and cysteine 47 are joined by a disulfide bond. Active-site charge relay system residues include histidine 46 and aspartate 96. N-linked (GlcNAc...) asparagine glycosylation occurs at asparagine 127. 2 cysteine pairs are disulfide-bonded: cysteine 159–cysteine 181 and cysteine 190–cysteine 219. Catalysis depends on serine 194, which acts as the Charge relay system.

The protein belongs to the peptidase S1 family. As to quaternary structure, heterodimer with venom peptide isomerase light chain; disulfide-linked. Post-translationally, N-linked glycan at Asn-127 consists of Man3-GlcNAc2-Fuc. In terms of tissue distribution, expressed by the venom gland.

The protein resides in the secreted. Peptide isomerase that inverts the chirality at the Ser-81 of omega-Aga IVB. Acts cofactor-independently. This chain is Venom peptide isomerase heavy chain, found in Agelenopsis aperta (North American funnel-web spider).